Reading from the N-terminus, the 121-residue chain is Small ribosomal subunit protein uS13 (121 aa).

The disordered stretch occupies residues 91–121 (HRRGLPTRGQNTKNNARTRKGPVKTVANKKK). The span at 106 to 121 (ARTRKGPVKTVANKKK) shows a compositional bias: basic residues.

Belongs to the universal ribosomal protein uS13 family. Part of the 30S ribosomal subunit. Forms a loose heterodimer with protein S19. Forms two bridges to the 50S subunit in the 70S ribosome.

In terms of biological role, located at the top of the head of the 30S subunit, it contacts several helices of the 16S rRNA. In the 70S ribosome it contacts the 23S rRNA (bridge B1a) and protein L5 of the 50S subunit (bridge B1b), connecting the 2 subunits; these bridges are implicated in subunit movement. Contacts the tRNAs in the A and P-sites. The chain is Small ribosomal subunit protein uS13 from Macrococcus caseolyticus (strain JCSC5402) (Macrococcoides caseolyticum).